The chain runs to 279 residues: Syntaxin-21 (279 aa).

Positions 1-34 are disordered; that stretch reads MSFQDLEAGTRSPAPNRFTGGRQQRPSSRGDPSQ. At Ser2 the chain carries N-acetylserine. Topologically, residues 2–258 are cytoplasmic; that stretch reads SFQDLEAGTR…AKTQRSNSSL (257 aa). Residues 21–31 show a composition bias toward polar residues; sequence GRQQRPSSRGD. Residues 65-94 are a coiled coil; sequence ELRDKLQKTRLQISELVKNTSAKLKEASEA. Residues 186 to 248 form the t-SNARE coiled-coil homology domain; the sequence is EAIIEEREQG…TQATVQLRKA (63 aa). The chain crosses the membrane as a helical; Anchor for type IV membrane protein span at residues 259 to 279; it reads TCLLILIFGIVLLIVIIVVLV.

It belongs to the syntaxin family. In terms of assembly, interacts with VTI11 and SYP51 to form a t-SNARE complex and with alpha-SNAP to form a 20S complex. In terms of tissue distribution, a high level expression is seen in the roots while a low level expression is seen in the leaves.

It is found in the prevacuolar compartment membrane. Its function is as follows. May function in the docking or fusion of transport vesicles with the prevacuolar membrane. This Arabidopsis thaliana (Mouse-ear cress) protein is Syntaxin-21 (SYP21).